We begin with the raw amino-acid sequence, 234 residues long: LexA repressor (234 aa).

A DNA-binding region (H-T-H motif) is located at residues 26-46 (FEEMKEALDLKSKSGVHRLIS). Positions 73-100 (AVGKAAPVSQREAANTNSALPPLRAAPK) are disordered. Residues 91–100 (ALPPLRAAPK) are compositionally biased toward low complexity. Catalysis depends on for autocatalytic cleavage activity residues Ser154 and Lys192.

Belongs to the peptidase S24 family. Homodimer.

It catalyses the reaction Hydrolysis of Ala-|-Gly bond in repressor LexA.. Its function is as follows. Represses a number of genes involved in the response to DNA damage (SOS response), including recA and lexA. In the presence of single-stranded DNA, RecA interacts with LexA causing an autocatalytic cleavage which disrupts the DNA-binding part of LexA, leading to derepression of the SOS regulon and eventually DNA repair. In Novosphingobium aromaticivorans (strain ATCC 700278 / DSM 12444 / CCUG 56034 / CIP 105152 / NBRC 16084 / F199), this protein is LexA repressor.